The sequence spans 204 residues: Large ribosomal subunit protein uL4 (204 aa).

Residues 52–76 (AEVRGGGKKPWAQKGGGRARAGSRR) form a disordered region.

Belongs to the universal ribosomal protein uL4 family. As to quaternary structure, part of the 50S ribosomal subunit.

Functionally, one of the primary rRNA binding proteins, this protein initially binds near the 5'-end of the 23S rRNA. It is important during the early stages of 50S assembly. It makes multiple contacts with different domains of the 23S rRNA in the assembled 50S subunit and ribosome. Forms part of the polypeptide exit tunnel. This is Large ribosomal subunit protein uL4 from Sulfurimonas denitrificans (strain ATCC 33889 / DSM 1251) (Thiomicrospira denitrificans (strain ATCC 33889 / DSM 1251)).